We begin with the raw amino-acid sequence, 363 residues long: sn-glycerol-3-phosphate import ATP-binding protein UgpC (363 aa).

The ABC transporter domain maps to 4-235 (VVLRNVRKTY…PATTFVASFI (232 aa)). 37-44 (GPSGCGKS) provides a ligand contact to ATP.

Belongs to the ABC transporter superfamily. sn-glycerol-3-phosphate importer (TC 3.A.1.1.3) family. In terms of assembly, the complex is composed of two ATP-binding proteins (UgpC), two transmembrane proteins (UgpA and UgpE) and a solute-binding protein (UgpB).

It is found in the cell inner membrane. The enzyme catalyses sn-glycerol 3-phosphate(out) + ATP + H2O = sn-glycerol 3-phosphate(in) + ADP + phosphate + H(+). In terms of biological role, part of the ABC transporter complex UgpBAEC involved in sn-glycerol-3-phosphate (G3P) import. Responsible for energy coupling to the transport system. This Rhodopseudomonas palustris (strain ATCC BAA-98 / CGA009) protein is sn-glycerol-3-phosphate import ATP-binding protein UgpC.